Consider the following 562-residue polypeptide: Sulfite reductase [NADPH] hemoprotein beta-component (562 aa).

4 residues coordinate [4Fe-4S] cluster: Cys425, Cys431, Cys470, and Cys474. Siroheme is bound at residue Cys474.

This sequence belongs to the nitrite and sulfite reductase 4Fe-4S domain family. As to quaternary structure, alpha(8)-beta(8). The alpha component is a flavoprotein, the beta component is a hemoprotein. It depends on siroheme as a cofactor. Requires [4Fe-4S] cluster as cofactor.

It carries out the reaction hydrogen sulfide + 3 NADP(+) + 3 H2O = sulfite + 3 NADPH + 4 H(+). It participates in sulfur metabolism; hydrogen sulfide biosynthesis; hydrogen sulfide from sulfite (NADPH route): step 1/1. Its function is as follows. Component of the sulfite reductase complex that catalyzes the 6-electron reduction of sulfite to sulfide. This is one of several activities required for the biosynthesis of L-cysteine from sulfate. The polypeptide is Sulfite reductase [NADPH] hemoprotein beta-component (Tolumonas auensis (strain DSM 9187 / NBRC 110442 / TA 4)).